Reading from the N-terminus, the 838-residue chain is Phosphatidylethanolamine N-methyltransferase 1 (838 aa).

The Lumenal portion of the chain corresponds to 1-48; the sequence is MATEIITEKKEIVARTRSSGITFNPPVTHDMVRSLFDPTIKKSFLECC. Residues 49-69 traverse the membrane as a helical segment; it reads ITLTILANFVLCYYLINWFGL. The Cytoplasmic portion of the chain corresponds to 70–73; that stretch reads SQAK. A helical membrane pass occupies residues 74 to 94; sequence LIFLIQYVYWRLAYNLGIGII. Residues 95 to 157 lie on the Lumenal side of the membrane; sequence LHYQSHYESL…ELNCWLLFRQ (63 aa). A helical transmembrane segment spans residues 158 to 178; the sequence is FVDLILMQDFTTYIIYVYLSL. Residues 179-184 are Cytoplasmic-facing; it reads PTDVSS. The helical transmembrane segment at 185–205 threads the bilayer; the sequence is LINWKSLIGIAMILFNIWVKI. Residues 206–236 lie on the Lumenal side of the membrane; sequence DAHRVVKDYAWYWGDFFFLQDAELTFDGVFN. A helical transmembrane segment spans residues 237–257; it reads ISPHPMYSIGYLGYYGLSLIC. At 258–261 the chain is on the cytoplasmic side; that stretch reads GDYR. The helical transmembrane segment at 262 to 282 threads the bilayer; that stretch reads VLLVSVGGHFLQFLFLKYVES. Residues 283 to 328 lie on the Lumenal side of the membrane; sequence PHIERTYGSDSPSNSTQHQIDDLIAKENYDYSRPLINTGILFENFQ. Residues 329 to 349 form a helical membrane-spanning segment; the sequence is FLRFSDYFTVSTILVLFSWFF. The Cytoplasmic segment spans residues 350 to 356; sequence TSKPSNN. Residues 357–377 form a helical membrane-spanning segment; it reads FLFVLTLLTKLTTWLLTSWIL. Residues 378–403 are Lumenal-facing; it reads FQQSNRKWFTRLFLKNGYTQIYSYQQ. Residues 404-424 form a helical membrane-spanning segment; that stretch reads WQFLYNYSLIVTNTLLFLHTL. Residues 425–435 are Cytoplasmic-facing; the sequence is SELYSIQSSDG. Residues 436–456 traverse the membrane as a helical segment; that stretch reads LNNSHVIFGLLLCAIQIWCNV. Residues 457–517 are Lumenal-facing; sequence ETRDAISDFG…VLMTNFSKTN (61 aa). Residues 518 to 538 form a helical membrane-spanning segment; it reads VTLAVLWTVTNLIFVKLIEEP. Topologically, residues 539-838 are cytoplasmic; it reads HVSKVYGNGT…DIKEVLDSLN (300 aa).

This sequence belongs to the class VI-like SAM-binding methyltransferase superfamily. CHO2 family.

It is found in the endoplasmic reticulum membrane. The catalysed reaction is a 1,2-diacyl-sn-glycero-3-phosphoethanolamine + S-adenosyl-L-methionine = a 1,2-diacyl-sn-glycero-3-phospho-N-methylethanolamine + S-adenosyl-L-homocysteine + H(+). The protein operates within phospholipid metabolism; phosphatidylcholine biosynthesis. In terms of biological role, catalyzes the first step of the methylation pathway of phosphatidylcholine biosynthesis, the SAM-dependent methylation of phosphatidylethanolamine (PE) to phosphatidylmonomethylethanolamine (PMME). The protein is Phosphatidylethanolamine N-methyltransferase 1 (CHO2-1) of Vanderwaltozyma polyspora (strain ATCC 22028 / DSM 70294 / BCRC 21397 / CBS 2163 / NBRC 10782 / NRRL Y-8283 / UCD 57-17) (Kluyveromyces polysporus).